A 246-amino-acid polypeptide reads, in one-letter code: Cell division protein ZapD (246 aa).

Belongs to the ZapD family. In terms of assembly, interacts with FtsZ.

The protein resides in the cytoplasm. Its function is as follows. Cell division factor that enhances FtsZ-ring assembly. Directly interacts with FtsZ and promotes bundling of FtsZ protofilaments, with a reduction in FtsZ GTPase activity. This Vibrio vulnificus (strain CMCP6) protein is Cell division protein ZapD.